A 141-amino-acid chain; its full sequence is Large ribosomal subunit protein uL14 (141 aa).

The protein belongs to the universal ribosomal protein uL14 family. As to quaternary structure, part of the 50S ribosomal subunit. Forms a cluster with proteins L3 and L24e, part of which may contact the 16S rRNA in 2 intersubunit bridges.

Functionally, binds to 23S rRNA. Forms part of two intersubunit bridges in the 70S ribosome. The chain is Large ribosomal subunit protein uL14 from Thermofilum pendens (strain DSM 2475 / Hrk 5).